The chain runs to 532 residues: CTP synthase (532 aa).

The segment at 1-267 (MTKYIFVTGG…DDIVLEHLQL (267 aa)) is amidoligase domain. Ser-13 contributes to the CTP binding site. Ser-13 is a UTP binding site. An ATP-binding site is contributed by 14 to 19 (SIGKGI). Tyr-54 is an L-glutamine binding site. Asp-71 provides a ligand contact to ATP. Residues Asp-71 and Glu-141 each contribute to the Mg(2+) site. CTP-binding positions include 148–150 (DIE), 188–193 (KTKPTQ), and Lys-224. Residues 188–193 (KTKPTQ) and Lys-224 contribute to the UTP site. Residues 292 to 532 (RIGLVGKYVS…DFVGAALKNK (241 aa)) enclose the Glutamine amidotransferase type-1 domain. L-glutamine is bound at residue Gly-354. Cys-381 functions as the Nucleophile; for glutamine hydrolysis in the catalytic mechanism. Residues 382 to 385 (LGMQ), Glu-405, and Arg-462 contribute to the L-glutamine site. Active-site residues include His-507 and Glu-509.

It belongs to the CTP synthase family. As to quaternary structure, homotetramer.

The catalysed reaction is UTP + L-glutamine + ATP + H2O = CTP + L-glutamate + ADP + phosphate + 2 H(+). The enzyme catalyses L-glutamine + H2O = L-glutamate + NH4(+). It catalyses the reaction UTP + NH4(+) + ATP = CTP + ADP + phosphate + 2 H(+). Its pathway is pyrimidine metabolism; CTP biosynthesis via de novo pathway; CTP from UDP: step 2/2. Its activity is regulated as follows. Allosterically activated by GTP, when glutamine is the substrate; GTP has no effect on the reaction when ammonia is the substrate. The allosteric effector GTP functions by stabilizing the protein conformation that binds the tetrahedral intermediate(s) formed during glutamine hydrolysis. Inhibited by the product CTP, via allosteric rather than competitive inhibition. Its function is as follows. Catalyzes the ATP-dependent amination of UTP to CTP with either L-glutamine or ammonia as the source of nitrogen. Regulates intracellular CTP levels through interactions with the four ribonucleotide triphosphates. The sequence is that of CTP synthase from Listeria monocytogenes serovar 1/2a (strain ATCC BAA-679 / EGD-e).